The chain runs to 195 residues: GTP cyclohydrolase 1 (195 aa).

Zn(2+)-binding residues include cysteine 85, histidine 88, and cysteine 157.

This sequence belongs to the GTP cyclohydrolase I family. Toroid-shaped homodecamer, composed of two pentamers of five dimers.

It carries out the reaction GTP + H2O = 7,8-dihydroneopterin 3'-triphosphate + formate + H(+). It functions in the pathway cofactor biosynthesis; 7,8-dihydroneopterin triphosphate biosynthesis; 7,8-dihydroneopterin triphosphate from GTP: step 1/1. In Clostridium acetobutylicum (strain ATCC 824 / DSM 792 / JCM 1419 / IAM 19013 / LMG 5710 / NBRC 13948 / NRRL B-527 / VKM B-1787 / 2291 / W), this protein is GTP cyclohydrolase 1.